Reading from the N-terminus, the 498-residue chain is Glycerol kinase (498 aa).

Residue T12 coordinates ADP. ATP is bound by residues T12, T13, and S14. T12 provides a ligand contact to sn-glycerol 3-phosphate. Residue R16 participates in ADP binding. Sn-glycerol 3-phosphate is bound by residues R82, E83, Y134, and D243. Positions 82, 83, 134, 243, and 244 each coordinate glycerol. Residues T265 and G308 each coordinate ADP. Residues T265, G308, Q312, and G409 each contribute to the ATP site. ADP is bound by residues G409 and N413.

The protein belongs to the FGGY kinase family. Homotetramer and homodimer (in equilibrium).

The catalysed reaction is glycerol + ATP = sn-glycerol 3-phosphate + ADP + H(+). It functions in the pathway polyol metabolism; glycerol degradation via glycerol kinase pathway; sn-glycerol 3-phosphate from glycerol: step 1/1. Its activity is regulated as follows. Activated by phosphorylation and inhibited by fructose 1,6-bisphosphate (FBP). Key enzyme in the regulation of glycerol uptake and metabolism. Catalyzes the phosphorylation of glycerol to yield sn-glycerol 3-phosphate. This is Glycerol kinase from Clostridium botulinum (strain Langeland / NCTC 10281 / Type F).